The following is a 287-amino-acid chain: Probable WRKY transcription factor 57 (287 aa).

Residues 86–99 (TSTNNNPSATSSSS) show a composition bias toward low complexity. A disordered region spans residues 86–137 (TSTNNNPSATSSSSEDPAENSTASAEKTPPPETPVKEKKKAQKRIRQPRFAF). Basic residues predominate over residues 122–132 (EKKKAQKRIRQ). Residues 141–206 (SDVDNLEDGY…YEGQHCHQTI (66 aa)) constitute a DNA-binding region (WRKY). A disordered region spans residues 248 to 287 (DNNAPSPRLPRPTTEDTPAVSTPSEEGLLGDIVPQTMRNP). A compositionally biased stretch (polar residues) spans 262–271 (EDTPAVSTPS).

It belongs to the WRKY group II-c family.

It localises to the nucleus. Its function is as follows. Transcription factor. Interacts specifically with the W box (5'-(T)TGAC[CT]-3'), a frequently occurring elicitor-responsive cis-acting element. The protein is Probable WRKY transcription factor 57 (WRKY57) of Arabidopsis thaliana (Mouse-ear cress).